Consider the following 86-residue polypeptide: Anti-adapter protein IraP (86 aa).

Residues Met-1–Met-36 adopt a coiled-coil conformation.

The protein belongs to the IraP family. As to quaternary structure, interacts with RssB.

Its subcellular location is the cytoplasm. Functionally, inhibits RpoS proteolysis by regulating RssB activity, thereby increasing the stability of the sigma stress factor RpoS especially during phosphate starvation, but also in stationary phase and during nitrogen starvation. Its effect on RpoS stability is due to its interaction with RssB, which probably blocks the interaction of RssB with RpoS, and the consequent delivery of the RssB-RpoS complex to the ClpXP protein degradation pathway. This Citrobacter koseri (strain ATCC BAA-895 / CDC 4225-83 / SGSC4696) protein is Anti-adapter protein IraP.